The sequence spans 445 residues: Phosphoglucosamine mutase (445 aa).

Ser-102 serves as the catalytic Phosphoserine intermediate. Residues Ser-102, Asp-241, Asp-243, and Asp-245 each contribute to the Mg(2+) site. Phosphoserine is present on Ser-102.

This sequence belongs to the phosphohexose mutase family. Mg(2+) serves as cofactor. Post-translationally, activated by phosphorylation.

It carries out the reaction alpha-D-glucosamine 1-phosphate = D-glucosamine 6-phosphate. Its function is as follows. Catalyzes the conversion of glucosamine-6-phosphate to glucosamine-1-phosphate. The chain is Phosphoglucosamine mutase from Escherichia coli (strain 55989 / EAEC).